The primary structure comprises 234 residues: UDP-2,3-diacylglucosamine hydrolase (234 aa).

The Mn(2+) site is built by Asp-9, His-11, Asp-42, Asn-80, and His-115. Residue 80–81 coordinates substrate; sequence NR. Asp-123, Ser-161, Lys-165, Lys-168, and His-196 together coordinate substrate. Residues His-196 and His-198 each contribute to the Mn(2+) site.

It belongs to the LpxH family. Mn(2+) is required as a cofactor.

The protein localises to the cell inner membrane. It carries out the reaction UDP-2-N,3-O-bis[(3R)-3-hydroxytetradecanoyl]-alpha-D-glucosamine + H2O = 2-N,3-O-bis[(3R)-3-hydroxytetradecanoyl]-alpha-D-glucosaminyl 1-phosphate + UMP + 2 H(+). It participates in glycolipid biosynthesis; lipid IV(A) biosynthesis; lipid IV(A) from (3R)-3-hydroxytetradecanoyl-[acyl-carrier-protein] and UDP-N-acetyl-alpha-D-glucosamine: step 4/6. Its function is as follows. Hydrolyzes the pyrophosphate bond of UDP-2,3-diacylglucosamine to yield 2,3-diacylglucosamine 1-phosphate (lipid X) and UMP by catalyzing the attack of water at the alpha-P atom. Involved in the biosynthesis of lipid A, a phosphorylated glycolipid that anchors the lipopolysaccharide to the outer membrane of the cell. In Histophilus somni (strain 129Pt) (Haemophilus somnus), this protein is UDP-2,3-diacylglucosamine hydrolase.